The primary structure comprises 356 residues: Branched-chain-amino-acid aminotransferase 6 (356 aa).

Lys199 is modified (N6-(pyridoxal phosphate)lysine).

It belongs to the class-IV pyridoxal-phosphate-dependent aminotransferase family. Requires pyridoxal 5'-phosphate as cofactor.

Its subcellular location is the cytoplasm. The enzyme catalyses L-leucine + 2-oxoglutarate = 4-methyl-2-oxopentanoate + L-glutamate. It catalyses the reaction L-isoleucine + 2-oxoglutarate = (S)-3-methyl-2-oxopentanoate + L-glutamate. The catalysed reaction is L-valine + 2-oxoglutarate = 3-methyl-2-oxobutanoate + L-glutamate. It functions in the pathway amino-acid biosynthesis; L-isoleucine biosynthesis; L-isoleucine from 2-oxobutanoate: step 4/4. Its pathway is amino-acid biosynthesis; L-leucine biosynthesis; L-leucine from 3-methyl-2-oxobutanoate: step 4/4. It participates in amino-acid biosynthesis; L-valine biosynthesis; L-valine from pyruvate: step 4/4. Its function is as follows. Converts 2-oxo acids to branched-chain amino acids. Acts on leucine, isoleucine and valine. The protein is Branched-chain-amino-acid aminotransferase 6 (BCAT6) of Arabidopsis thaliana (Mouse-ear cress).